Reading from the N-terminus, the 482-residue chain is Regulator of nonsense transcripts UPF3 (482 aa).

The interval 9-14 (KVVVRH) is binds to UPF2. The segment at 9-219 (KVVVRHLPPS…EKESSKNVPR (211 aa)) is necessary for interaction with UPF2. Residues 53–482 (YSRAYVSFKA…MWIQKPSSGT (430 aa)) are sufficient for association with EJC core. The segment at 173–482 (PQGLSDIRRG…MWIQKPSSGT (310 aa)) is disordered. Positions 201–214 (RNSEKKKYVEKESS) are enriched in basic and acidic residues. Polar residues-rich tracts occupy residues 223 to 239 (ADVSSSKPDYRQSNSSG), 292 to 308 (DTNLSRNSTDSRQNQKS), and 325 to 336 (RPSQSSTFVQSE). Basic and acidic residues-rich tracts occupy residues 337–348 (QRVEPSEAENYK) and 370–394 (EKQERRTRNKDRPDRVMWAPRRDGS). Residues 414 to 435 (SQRSGEVVNSSGGHTLENGSAR) show a composition bias toward polar residues.

It belongs to the RENT3 family. In terms of assembly, found in a post-splicing messenger ribonucleoprotein (mRNP) complex. Associates with the exon junction complex (EJC). Interacts with CPL1/FRY2.

It is found in the nucleus. The protein localises to the nucleolus. The protein resides in the cytoplasm. Functionally, recruits UPF2 at the cytoplasmic side of the nuclear envelope and the subsequent formation of an UPF1-UPF2-UPF3 surveillance complex (including UPF1 bound to release factors at the stalled ribosome) is believed to activate NMD. Binds spliced mRNA upstream of exon-exon junctions. Involved in nonsense-mediated decay (NMD) of mRNAs containing premature stop codons (premature termination codon PTC) by associating with the nuclear exon junction complex (EJC) and serving as link between the EJC core and NMD machinery. Eliminates the production of nonsense-containing RNAs (ncRNAs). Required for plant development and adaptation to environmental stresses, including plant defense and response to wounding. This chain is Regulator of nonsense transcripts UPF3, found in Arabidopsis thaliana (Mouse-ear cress).